The following is a 341-amino-acid chain: NLNRTNWPKKIFNIYWNVPTYFCHQHDVYFNELTKFDIKYNPKGNYRGDTISLFYDPGNFPAMVPLKNGTYDIRNEGVPQKGNITVHLQQFTKELDEIYPKKISGGIGVINFNKWRPIFRRNVNNLKINKEVSIDLVRKEHPKWDKSMIETEASNRFEKSARIFMEKTLKLAKDIRNKNKWGYHGYPYCPTASTGNPSFDCDALAMNENDKLSWLFKYQDVLLPSVYVKHVLKPEEKIGLVRGSVKEAVRISKKFEHLPKVLSYWWYAYEDKMDTFLTETDVKNTFREILINGGDGIIIWGTMHDLNKEKCEKLKQYLSTILGPIAFKVMEAVKKRTPLNF.

Residues asparagine 3, asparagine 68, and asparagine 83 are each glycosylated (N-linked (GlcNAc...) asparagine). 2 disulfides stabilise this stretch: cysteine 23-cysteine 311 and cysteine 189-cysteine 201.

This sequence belongs to the glycosyl hydrolase 56 family. In terms of tissue distribution, expressed by the venom gland.

It localises to the secreted. The catalysed reaction is Random hydrolysis of (1-&gt;4)-linkages between N-acetyl-beta-D-glucosamine and D-glucuronate residues in hyaluronate.. Functionally, may hydrolyze high molecular weight hyaluronic acid to produce small oligosaccharides. The chain is Hyaluronidase A from Vespa velutina (Asian yellow-legged hornet).